Reading from the N-terminus, the 260-residue chain is NH(3)-dependent NAD(+) synthetase (260 aa).

31 to 38 (GLSGGLDS) contributes to the ATP binding site. Aspartate 37 provides a ligand contact to Mg(2+). Arginine 112 lines the deamido-NAD(+) pocket. An ATP-binding site is contributed by threonine 132. Glutamate 137 is a Mg(2+) binding site. Lysine 161 and serine 183 together coordinate ATP.

The protein belongs to the NAD synthetase family. As to quaternary structure, homodimer.

The catalysed reaction is deamido-NAD(+) + NH4(+) + ATP = AMP + diphosphate + NAD(+) + H(+). It functions in the pathway cofactor biosynthesis; NAD(+) biosynthesis; NAD(+) from deamido-NAD(+) (ammonia route): step 1/1. Its function is as follows. Catalyzes the ATP-dependent amidation of deamido-NAD to form NAD. Uses ammonia as a nitrogen source. The protein is NH(3)-dependent NAD(+) synthetase of Helicobacter pylori (strain G27).